The sequence spans 354 residues: Protein RecA (354 aa).

An ATP-binding site is contributed by 75 to 82; sequence GPESSGKT.

This sequence belongs to the RecA family.

Its subcellular location is the cytoplasm. Its function is as follows. Can catalyze the hydrolysis of ATP in the presence of single-stranded DNA, the ATP-dependent uptake of single-stranded DNA by duplex DNA, and the ATP-dependent hybridization of homologous single-stranded DNAs. It interacts with LexA causing its activation and leading to its autocatalytic cleavage. This is Protein RecA from Cupriavidus taiwanensis (strain DSM 17343 / BCRC 17206 / CCUG 44338 / CIP 107171 / LMG 19424 / R1) (Ralstonia taiwanensis (strain LMG 19424)).